The chain runs to 246 residues: MTQTFADQKRKTVETAEFTEDGRYKRKVRSFVLRTGRLSEFQRNMMNDNWGTLGLDYQTEPFDFAKIYGNDNPVVLEIGFGMGKSLVDMAFANPDKNYLGIEVHTPGVGACIAYAVEKGVTNLRVICHDATEILRDSIADGTLGGLQLFFPDPWHKAKHHKRRIVQPHFVTQVIQKLSENGFIHMATDWENYAEQMLEVLSANTDLVNTSKNGNYIPRPDFRPLTKFEARGHKLGHGVWDLYFVKK.

Positions 77, 102, 129, and 152 each coordinate S-adenosyl-L-methionine. D152 is an active-site residue. Substrate-binding positions include K156, D188, and 225–228 (TKFE).

The protein belongs to the class I-like SAM-binding methyltransferase superfamily. TrmB family.

The catalysed reaction is guanosine(46) in tRNA + S-adenosyl-L-methionine = N(7)-methylguanosine(46) in tRNA + S-adenosyl-L-homocysteine. Its pathway is tRNA modification; N(7)-methylguanine-tRNA biosynthesis. Functionally, catalyzes the formation of N(7)-methylguanine at position 46 (m7G46) in tRNA. This Haemophilus influenzae (strain PittGG) protein is tRNA (guanine-N(7)-)-methyltransferase.